The primary structure comprises 454 residues: Sensor histidine kinase RppB (454 aa).

The Periplasmic segment spans residues 1 to 13 (MNTRRLFARSRLQ). A helical membrane pass occupies residues 14-34 (LAFWYALVMGGILTLLGLGVY). The Cytoplasmic portion of the chain corresponds to 35-186 (RAIVQANWMA…LAAFDAENKR (152 aa)). A helical transmembrane segment spans residues 187-207 (ILWILGLSFPIALGLVAFSSW). At 208–454 (GLAGLAMRPI…PIFSVPIVHS (247 aa)) the chain is on the periplasmic side. The region spanning 230–448 (NAAHELRSPL…LFTIQLPIFS (219 aa)) is the Histidine kinase domain. At His233 the chain carries Phosphohistidine; by autocatalysis.

It is found in the cell inner membrane. It carries out the reaction ATP + protein L-histidine = ADP + protein N-phospho-L-histidine.. Its function is as follows. Member of two-component regulatory system RppA/RppB, involved in the establishment of the appropriate stoichiometry between the 2 photosystems. It senses changes in the plastoquinone (PQ) redox poise. Another group shows this two-component pair, renamed NrsR/NrsS, controls the nickel-dependent expression of the nrsBACD operon; they suggest the photosystem-related activities seen earlier are due to the expression of NrsS (RppB) in the absence of its natural substrate NrsR (RppA). The sequence is that of Sensor histidine kinase RppB from Synechocystis sp. (strain ATCC 27184 / PCC 6803 / Kazusa).